A 77-amino-acid chain; its full sequence is Large ribosomal subunit protein bL28 (77 aa).

It belongs to the bacterial ribosomal protein bL28 family.

The protein is Large ribosomal subunit protein bL28 of Delftia acidovorans (strain DSM 14801 / SPH-1).